Consider the following 3135-residue polypeptide: Beauvericin nonribosomal cyclodepsipeptide synthetase BEA1 (3135 aa).

Residues 70–458 form a condensation 1 region; sequence HVAYEISNDI…QRLRGSPDKL (389 aa). The segment at 196–228 is disordered; the sequence is LSNRPYTPESSDPEDDGLSLTPTDGSKTPETEG. Positions 499 to 896 are adenylation 1; sequence SLSPSKVAIC…GRMDSQVKIR (398 aa). The Carrier 1 domain occupies 1021-1097; the sequence is STTTSSQSKL…GLEAIVNGSA (77 aa). Residue Ser-1058 is modified to O-(pantetheine 4'-phosphoryl)serine. A condensation 2 region spans residues 1115–1542; it reads SYSQGRLWFL…NIPISVLPLT (428 aa). Residues 1571–1974 form an adenylation 2 region; sequence FRTQVAAYPD…GRMDTQFKIR (404 aa). Residues 2042 to 2182 are S-adenosyl-L-methionine-dependent N-methyltransferase; sequence MYADIGDIDP…FPSPEYLAQV (141 aa). Carrier domains follow at residues 2509 to 2583 and 2603 to 2677; these read VPIS…REGL and APRT…ESTD. Residues Ser-2543 and Ser-2637 each carry the O-(pantetheine 4'-phosphoryl)serine modification. The interval 2721–3127 is condensation 3; that stretch reads QDMYQSTQMQ…QYFLEEVCNT (407 aa).

This sequence belongs to the NRP synthetase family.

The enzyme catalyses 3 (R)-2-hydroxy-3-methylbutanoate + 3 L-phenylalanine + 3 S-adenosyl-L-methionine + 6 ATP = beauvericin + 6 AMP + 3 S-adenosyl-L-homocysteine + 6 diphosphate + 6 H(+). Its function is as follows. Beauvericin nonribosomal cyclodepsipeptide synthetase; part of the gene cluster that mediates the biosynthesis of beauvericin (BEA), a non-ribosomal cyclic hexadepsipeptide that shows antibiotic, antifungal, insecticidal, and cancer cell antiproliferative and antihaptotactic activity. Ketoisovalerate reductase BEA2 catalyzes the NADPH-specific reduction of ketoisovaleric acid to hydroxyisovalerate, a precursor for beauvericin biosynthesis. The nonribosomal cyclodepsipeptide synthetase BEA1 then catalyzes the formation of beauvericin via condensation and cyclization of 3 dipeptidol monomers, each composed of one unit of hydroxyisovalerate and one unit of N-methyl-phenylalanine. This is Beauvericin nonribosomal cyclodepsipeptide synthetase BEA1 from Gibberella fujikuroi (strain CBS 195.34 / IMI 58289 / NRRL A-6831) (Bakanae and foot rot disease fungus).